The following is a 166-amino-acid chain: Mitochondrial fission process protein 1 (166 aa).

3 helical membrane-spanning segments follow: residues S33–A53, A78–F98, and T125–V145.

This sequence belongs to the MTFP1 family.

Its subcellular location is the mitochondrion inner membrane. Functionally, involved in the mitochondrial division probably by regulating membrane fission. Loss-of-function leads to apoptosis. The protein is Mitochondrial fission process protein 1 (mtp-18) of Caenorhabditis elegans.